The primary structure comprises 260 residues: HTH-type transcriptional repressor NanR (260 aa).

The interval Met-1–Gly-20 is disordered. Residues Lys-27 to Pro-95 form the HTH gntR-type domain. The H-T-H motif DNA-binding region spans Glu-55 to Ala-74.

It belongs to the NanR family.

Transcriptional repressor that controls expression of the genes required for the catabolism of sialic acids. The sequence is that of HTH-type transcriptional repressor NanR from Cronobacter sakazakii (strain ATCC BAA-894) (Enterobacter sakazakii).